Here is a 446-residue protein sequence, read N- to C-terminus: N-succinylarginine dihydrolase (446 aa).

Residues 19–28 (AGLSFGNVAS), N110, and 137–138 (HR) contribute to the substrate site. E174 is a catalytic residue. R213 provides a ligand contact to substrate. The active site involves H249. Substrate is bound by residues D251 and N364. C370 (nucleophile) is an active-site residue.

Belongs to the succinylarginine dihydrolase family. As to quaternary structure, homodimer.

It catalyses the reaction N(2)-succinyl-L-arginine + 2 H2O + 2 H(+) = N(2)-succinyl-L-ornithine + 2 NH4(+) + CO2. The protein operates within amino-acid degradation; L-arginine degradation via AST pathway; L-glutamate and succinate from L-arginine: step 2/5. Functionally, catalyzes the hydrolysis of N(2)-succinylarginine into N(2)-succinylornithine, ammonia and CO(2). The protein is N-succinylarginine dihydrolase of Burkholderia thailandensis (strain ATCC 700388 / DSM 13276 / CCUG 48851 / CIP 106301 / E264).